The primary structure comprises 1109 residues: MKVAVNTFLLFLCSTSSIYAAFALNSDGAALLSLTRHWTSIPSDITQSWNASDSTPCSWLGVECDRRQFVDTLNLSSYGISGEFGPEISHLKHLKKVVLSGNGFFGSIPSQLGNCSLLEHIDLSSNSFTGNIPDTLGALQNLRNLSLFFNSLIGPFPESLLSIPHLETVYFTGNGLNGSIPSNIGNMSELTTLWLDDNQFSGPVPSSLGNITTLQELYLNDNNLVGTLPVTLNNLENLVYLDVRNNSLVGAIPLDFVSCKQIDTISLSNNQFTGGLPPGLGNCTSLREFGAFSCALSGPIPSCFGQLTKLDTLYLAGNHFSGRIPPELGKCKSMIDLQLQQNQLEGEIPGELGMLSQLQYLHLYTNNLSGEVPLSIWKIQSLQSLQLYQNNLSGELPVDMTELKQLVSLALYENHFTGVIPQDLGANSSLEVLDLTRNMFTGHIPPNLCSQKKLKRLLLGYNYLEGSVPSDLGGCSTLERLILEENNLRGGLPDFVEKQNLLFFDLSGNNFTGPIPPSLGNLKNVTAIYLSSNQLSGSIPPELGSLVKLEHLNLSHNILKGILPSELSNCHKLSELDASHNLLNGSIPSTLGSLTELTKLSLGENSFSGGIPTSLFQSNKLLNLQLGGNLLAGDIPPVGALQALRSLNLSSNKLNGQLPIDLGKLKMLEELDVSHNNLSGTLRVLSTIQSLTFINISHNLFSGPVPPSLTKFLNSSPTSFSGNSDLCINCPADGLACPESSILRPCNMQSNTGKGGLSTLGIAMIVLGALLFIICLFLFSAFLFLHCKKSVQEIAISAQEGDGSLLNKVLEATENLNDKYVIGKGAHGTIYKATLSPDKVYAVKKLVFTGIKNGSVSMVREIETIGKVRHRNLIKLEEFWLRKEYGLILYTYMENGSLHDILHETNPPKPLDWSTRHNIAVGTAHGLAYLHFDCDPAIVHRDIKPMNILLDSDLEPHISDFGIAKLLDQSATSIPSNTVQGTIGYMAPENAFTTVKSRESDVYSYGVVLLELITRKKALDPSFNGETDIVGWVRSVWTQTGEIQKIVDPSLLDELIDSSVMEQVTEALSLALRCAEKEVDKRPTMRDVVKQLTRWSIRSYSSSVRNKSK.

Positions 1 to 20 are cleaved as a signal peptide; the sequence is MKVAVNTFLLFLCSTSSIYA. Residues 21 to 764 are Extracellular-facing; the sequence is AFALNSDGAA…GGLSTLGIAM (744 aa). 3 N-linked (GlcNAc...) asparagine glycosylation sites follow: Asn50, Asn74, and Asn114. LRR repeat units follow at residues 69–92, 93–115, 117–140, 141–162, 165–187, and 189–209; these read FVDTLNLSSYGISGEFGPEISHLK, HLKKVVLSGNGFFGSIPSQLGNC, LLEHIDLSSNSFTGNIPDTLGALQ, NLRNLSLFFNSLIGPFPESLLS, HLETVYFTGNGLNGSIPSNIGNM, and ELTTLWLDDNQFSGPVPSSLG. Residues Asn144, Asn177, and Asn186 are each glycosylated (N-linked (GlcNAc...) asparagine). The N-linked (GlcNAc...) asparagine glycan is linked to Asn210. 20 LRR repeats span residues 213-236, 237-258, 261-284, 309-331, 333-355, 357-378, 381-404, 405-427, 429-451, 453-476, 477-499, 500-523, 524-546, 548-569, 572-595, 596-618, 620-642, 643-666, 667-689, and 690-710; these read TLQELYLNDNNLVGTLPVTLNNLE, NLVYLDVRNNSLVGAIPLDFVS, QIDTISLSNNQFTGGLPPGLGNCT, KLDTLYLAGNHFSGRIPPELGKC, SMIDLQLQQNQLEGEIPGELGML, QLQYLHLYTNNLSGEVPLSIWK, SLQSLQLYQNNLSGELPVDMTELK, QLVSLALYENHFTGVIPQDLGAN, SLEVLDLTRNMFTGHIPPNLCSQ, KLKRLLLGYNYLEGSVPSDLGGCS, TLERLILEENNLRGGLPDFVEKQ, NLLFFDLSGNNFTGPIPPSLGNLK, NVTAIYLSSNQLSGSIPPELGSL, KLEHLNLSHNILKGILPSELSN, KLSELDASHNLLNGSIPSTLGSLT, ELTKLSLGENSFSGGIPTSLFQS, KLLNLQLGGNLLAGDIPPVGALQ, ALRSLNLSSNKLNGQLPIDLGKLK, MLEELDVSHNNLSGTLRVLSTIQ, and SLTFINISHNLFSGPVPPSLT. Residues Asn245 and Asn282 are each glycosylated (N-linked (GlcNAc...) asparagine). Asn367, Asn391, and Asn427 each carry an N-linked (GlcNAc...) asparagine glycan. Residues Asn510, Asn524, Asn553, and Asn584 are each glycosylated (N-linked (GlcNAc...) asparagine). Asn648, Asn677, and Asn695 each carry an N-linked (GlcNAc...) asparagine glycan. A helical membrane pass occupies residues 765-785; the sequence is IVLGALLFIICLFLFSAFLFL. The Cytoplasmic portion of the chain corresponds to 786–1109; sequence HCKKSVQEIA…YSSSVRNKSK (324 aa). Residues 816–1096 enclose the Protein kinase domain; it reads LNDKYVIGKG…DVVKQLTRWS (281 aa). ATP is bound by residues 822–830 and Lys845; that span reads IGKGAHGTI. One copy of the LRR 27 repeat lies at 827 to 850; sequence HGTIYKATLSPDKVYAVKKLVFTG. Asp942 functions as the Proton acceptor in the catalytic mechanism. The LRR 28 repeat unit spans residues 958 to 981; the sequence is ISDFGIAKLLDQSATSIPSNTVQG.

This sequence belongs to the protein kinase superfamily. Ser/Thr protein kinase family. As to expression, INRPK1 and INRPK1b are expressed in leaves, cotyledons, shoot tips and roots from induced and vegetative plants. The highest concentrations of INRPK1 are found in vegetative roots, and the lowest concentrations in vegetative cotyledons. INRPK1b is more abundant in roots than other tissues. INRPK1a is expressed in vegetative roots. INRPK1c is expressed in cotyledons.

It is found in the cell membrane. The protein resides in the secreted. The enzyme catalyses L-seryl-[protein] + ATP = O-phospho-L-seryl-[protein] + ADP + H(+). It catalyses the reaction L-threonyl-[protein] + ATP = O-phospho-L-threonyl-[protein] + ADP + H(+). Possible role in short-day photoperiod floral induction. The protein is Receptor-like protein kinase (INRPK1) of Ipomoea nil (Japanese morning glory).